Here is a 285-residue protein sequence, read N- to C-terminus: ENMTFGTTLVTNPKGGFLACGPLYAYKCGRLHYTTGVCSNVSSTFETVKAVAPSVQECKTQLDIVIVLDGSNSIYPWESVTAFLNSLLRNMDIGPQQTQVGIVQYGQTVVHEFYLNTYSTTEEVMDAALRIRQRGGTQTMTALGIDTAREEAFTEAHGARRGVQKVMVIVTDGESHDNYRLQEVIDKCEDENIQRFAIAILGSYSRGNLSTEKFVEEIKSIASKPTEKHFFNVSDELALVTIVEALGERIFALEATTDQQAASFEMEMSQAGFSAHYSQDWVMLG.

Over 1–285 the chain is Extracellular; that stretch reads ENMTFGTTLV…HYSQDWVMLG (285 aa). 4 N-linked (GlcNAc...) asparagine glycosylation sites follow: Asn2, Asn40, Asn208, and Asn232. The 214-residue stretch at 66-279 folds into the VWFA domain; the sequence is IVLDGSNSIY…QAGFSAHYSQ (214 aa).

Belongs to the integrin alpha chain family. In terms of assembly, heterodimer of an alpha and a beta subunit. Alpha-1 associates with beta-1.

The protein resides in the membrane. Functionally, integrin alpha-1/beta-1 is a receptor for laminin and collagen. It recognizes the proline-hydroxylated sequence G-F-P-G-E-R in collagen. Involved in anchorage-dependent, negative regulation of EGF-stimulated cell growth. This is Integrin alpha-1 (ITGA1) from Gallus gallus (Chicken).